We begin with the raw amino-acid sequence, 241 residues long: Sugar fermentation stimulation protein homolog (241 aa).

Belongs to the SfsA family.

The sequence is that of Sugar fermentation stimulation protein homolog from Trichormus variabilis (strain ATCC 29413 / PCC 7937) (Anabaena variabilis).